The primary structure comprises 60 residues: Ixodegrin YY-39 (60 aa).

The signal sequence occupies residues 1–21 (MNAALIAALLILGALTLDATA). The short motif at 49 to 51 (RGD) is the Cell attachment site element.

It belongs to the ixodegrin family. In terms of processing, contains 3 disulfide bonds. In terms of tissue distribution, expressed in salivary glands.

It localises to the secreted. In terms of biological role, tick salivary platelet aggregation inhibitor that plays an important part in the anti-hemostatic strategy of ticks. Inhibits platelet aggregation induced by ADP, thrombin and thromboxane A2 (TXA2). Blocks platelet adhesion to soluble collagen (most probably through the binding to alpha-2/beta-1 integrin (ITGA2/ITGB1)) and binds to purified glycoprotein IIb/IIIa (ITGA2B/ITGB3) in a dose-dependent manner. In vivo, reduces thrombus weight effectively in a rat arteriovenous shunt model and inhibits thrombosis in a carrageenan-induced mouse tail thrombosis model. The chain is Ixodegrin YY-39 from Ixodes scapularis (Black-legged tick).